Here is a 327-residue protein sequence, read N- to C-terminus: Phenylalanine--tRNA ligase alpha subunit (327 aa).

Mg(2+) is bound at residue Glu252.

The protein belongs to the class-II aminoacyl-tRNA synthetase family. Phe-tRNA synthetase alpha subunit type 1 subfamily. In terms of assembly, tetramer of two alpha and two beta subunits. The cofactor is Mg(2+).

It is found in the cytoplasm. It carries out the reaction tRNA(Phe) + L-phenylalanine + ATP = L-phenylalanyl-tRNA(Phe) + AMP + diphosphate + H(+). In Yersinia enterocolitica serotype O:8 / biotype 1B (strain NCTC 13174 / 8081), this protein is Phenylalanine--tRNA ligase alpha subunit.